The chain runs to 78 residues: Neurogranin (78 aa).

The residue at position 1 (M1) is an N-acetylmethionine. The cysteines at positions 3 and 51 are disulfide-linked. In terms of domain architecture, IQ spans 26–47 (ANAAAAKIQASFRGHMARKKIK). S36 is modified (phosphoserine; by PHK and PKC). The disordered stretch occupies residues 39–78 (GHMARKKIKSGECGRKGPGPGGPGGAGGARGGAGGGPSGD). In terms of domain architecture, Collagen-like spans 48-78 (SGECGRKGPGPGGPGGAGGARGGAGGGPSGD). Residues 54 to 78 (KGPGPGGPGGAGGARGGAGGGPSGD) show a composition bias toward gly residues. Citrulline; partial is present on R68. Omega-N-methylarginine is present on R68.

The protein belongs to the neurogranin family. As to quaternary structure, interacts with apo-calmodulin; this interaction decreases the affinity of calmodulin for calcium ions. In terms of processing, disulfide bond formation is redox-sensitive. The cysteine residues are readily oxidized by several nitric acid (NO) donors and other oxidants to form intramolecular disulfide. Cys-51 can form a disulfide with any other of the cysteine residues with an order of reactivity Cys-9 &gt; Cys-4 &gt; Cys-3. Post-translationally, phosphorylated at Ser-36 by PHK and PKC, phosphorylation prevents interaction with Calmodulin and interrupts several learning- and memory-associated functions.

Its subcellular location is the cytoplasm. It is found in the synapse. It localises to the cell projection. The protein localises to the dendritic spine. In terms of biological role, regulates the affinity of calmodulin for calcium. Involved in synaptic plasticity and spatial learning. This is Neurogranin (Nrgn) from Mus musculus (Mouse).